The primary structure comprises 251 residues: Extracellular superoxide dismutase [Cu-Zn] (251 aa).

Residues 1-15 (MLAFLFYGLLLAACG) form the signal peptide. A propeptide spanning residues 16–24 (SVTMSNPGE) is cleaved from the precursor. Intrachain disulfides connect Cys77–Cys222 and Cys139–Cys221. Residue Asn121 is glycosylated (N-linked (GlcNAc...) asparagine). Residues His128, His130, and His145 each coordinate Cu cation. Positions 145, 153, 156, and 159 each coordinate Zn(2+). His195 provides a ligand contact to Cu cation. Residues 230–251 (AAWESQTKERKKRRRESECKTT) form a disordered region.

Belongs to the Cu-Zn superoxide dismutase family. In terms of assembly, homotetramer. Directly interacts with ATP7A/MNK; this interaction is copper-dependent and is required for SOD3 activity. It depends on Cu cation as a cofactor. Requires Zn(2+) as cofactor.

It is found in the secreted. It localises to the extracellular space. Its subcellular location is the golgi apparatus. The protein resides in the trans-Golgi network. The enzyme catalyses 2 superoxide + 2 H(+) = H2O2 + O2. Its function is as follows. Protect the extracellular space from toxic effect of reactive oxygen intermediates by converting superoxide radicals into hydrogen peroxide and oxygen. The polypeptide is Extracellular superoxide dismutase [Cu-Zn] (Sod3) (Mus musculus (Mouse)).